Here is a 126-residue protein sequence, read N- to C-terminus: Glycerol dehydrogenase small subunit (126 aa).

4 helical membrane passes run 13 to 33, 41 to 61, 67 to 87, and 92 to 112; these read WLTL…VIGG, GSTY…FMLM, AFLY…EVGF, and LLPR…TIPV.

It is found in the cell membrane. The enzyme catalyses glycerol + A = dihydroxyacetone + AH2. Its function is as follows. Catalyzes the oxidation of glycerol to glycerone. Also acts, more slowly, on a number of other polyols including D-sorbitol, D-arabinitol, D-mannitol, meso-erythritol, adonitol and propylene glycol. The sequence is that of Glycerol dehydrogenase small subunit (sldB) from Gluconobacter thailandicus.